The following is a 228-amino-acid chain: Ankyrin repeat domain-containing protein 46 (228 aa).

4 ANK repeats span residues 11-40 (QTNV…DPNI), 44-74 (RGRT…PLAT), 77-103 (QGNT…KIDI), and 107-138 (QGAT…EVKG). A helical transmembrane segment spans residues 195 to 215 (VLLLILVIALLSLGIAYYVSG).

The protein resides in the membrane. The polypeptide is Ankyrin repeat domain-containing protein 46 (Ankrd46) (Mus musculus (Mouse)).